Reading from the N-terminus, the 188-residue chain is Methylated-DNA--protein-cysteine methyltransferase (188 aa).

Tyr-120, Gly-121, and Arg-134 together coordinate DNA. The active-site Nucleophile; methyl group acceptor is the Cys-151. Ser-157 provides a ligand contact to DNA.

The protein belongs to the MGMT family.

Its subcellular location is the nucleus. The enzyme catalyses a 6-O-methyl-2'-deoxyguanosine in DNA + L-cysteinyl-[protein] = S-methyl-L-cysteinyl-[protein] + a 2'-deoxyguanosine in DNA. It catalyses the reaction a 4-O-methyl-thymidine in DNA + L-cysteinyl-[protein] = a thymidine in DNA + S-methyl-L-cysteinyl-[protein]. Its function is as follows. Involved in the cellular defense against the biological effects of O6-methylguanine (O6-MeG) and O4-methylthymine (O4-MeT) in DNA. Repairs the methylated nucleobase in DNA by stoichiometrically transferring the methyl group to a cysteine residue in the enzyme. This is a suicide reaction: the enzyme is irreversibly inactivated. Prefers double-stranded DNA over single-stranded DNA as substrate. This Saccharomyces cerevisiae (strain ATCC 204508 / S288c) (Baker's yeast) protein is Methylated-DNA--protein-cysteine methyltransferase (MGT1).